We begin with the raw amino-acid sequence, 74 residues long: Exodeoxyribonuclease 7 small subunit (74 aa).

The protein belongs to the XseB family. In terms of assembly, heterooligomer composed of large and small subunits.

The protein localises to the cytoplasm. It carries out the reaction Exonucleolytic cleavage in either 5'- to 3'- or 3'- to 5'-direction to yield nucleoside 5'-phosphates.. Bidirectionally degrades single-stranded DNA into large acid-insoluble oligonucleotides, which are then degraded further into small acid-soluble oligonucleotides. This chain is Exodeoxyribonuclease 7 small subunit, found in Symbiobacterium thermophilum (strain DSM 24528 / JCM 14929 / IAM 14863 / T).